The chain runs to 403 residues: Acetate kinase (403 aa).

Asn7 is a Mg(2+) binding site. Position 14 (Lys14) interacts with ATP. Arg90 is a substrate binding site. The Proton donor/acceptor role is filled by Asp147. ATP contacts are provided by residues 207 to 211 (HIGNG), 283 to 285 (DMR), and 331 to 335 (GVGEN). Position 386 (Glu386) interacts with Mg(2+).

The protein belongs to the acetokinase family. In terms of assembly, homodimer. It depends on Mg(2+) as a cofactor. Requires Mn(2+) as cofactor.

Its subcellular location is the cytoplasm. The enzyme catalyses acetate + ATP = acetyl phosphate + ADP. The protein operates within metabolic intermediate biosynthesis; acetyl-CoA biosynthesis; acetyl-CoA from acetate: step 1/2. Catalyzes the formation of acetyl phosphate from acetate and ATP. Can also catalyze the reverse reaction. Phosphorylates propionate (54%) in addition to acetate (100%). Uses GTP (100%), ITP (163%), UTP (56%), and CTP (21%) as phosphoryl donors in addition to ATP (100%). This Thermotoga maritima (strain ATCC 43589 / DSM 3109 / JCM 10099 / NBRC 100826 / MSB8) protein is Acetate kinase.